Reading from the N-terminus, the 338-residue chain is Anthranilate phosphoribosyltransferase (338 aa).

5-phospho-alpha-D-ribose 1-diphosphate-binding positions include Gly81, 84-85 (GD), Thr89, 91-94 (NIST), 109-117 (KHGNRAQSS), and Thr121. Residue Gly81 participates in anthranilate binding. Ser93 is a binding site for Mg(2+). Asn112 lines the anthranilate pocket. Anthranilate is bound at residue Arg167. Positions 225 and 226 each coordinate Mg(2+).

The protein belongs to the anthranilate phosphoribosyltransferase family. As to quaternary structure, homodimer. The cofactor is Mg(2+).

The enzyme catalyses N-(5-phospho-beta-D-ribosyl)anthranilate + diphosphate = 5-phospho-alpha-D-ribose 1-diphosphate + anthranilate. The protein operates within amino-acid biosynthesis; L-tryptophan biosynthesis; L-tryptophan from chorismate: step 2/5. In terms of biological role, catalyzes the transfer of the phosphoribosyl group of 5-phosphorylribose-1-pyrophosphate (PRPP) to anthranilate to yield N-(5'-phosphoribosyl)-anthranilate (PRA). The chain is Anthranilate phosphoribosyltransferase from Rhizobium rhizogenes (strain K84 / ATCC BAA-868) (Agrobacterium radiobacter).